Here is a 200-residue protein sequence, read N- to C-terminus: Holliday junction branch migration complex subunit RuvA (200 aa).

Residues 1–64 (MIGHLRGIIV…EDAHTLYGFH (64 aa)) form a domain I region. A domain II region spans residues 65-143 (NDHERRLFRA…RWHTNDTPSP (79 aa)). The tract at residues 133-152 (SRWHTNDTPSPEGLRSSNTQ) is disordered. A flexible linker region spans residues 144-148 (EGLRS). The interval 149-200 (SNTQPTQDAISALMALGYKPQEAKRAIDAIQKPDLSAETLIRLALKQMVLGT) is domain III.

The protein belongs to the RuvA family. As to quaternary structure, homotetramer. Forms an RuvA(8)-RuvB(12)-Holliday junction (HJ) complex. HJ DNA is sandwiched between 2 RuvA tetramers; dsDNA enters through RuvA and exits via RuvB. An RuvB hexamer assembles on each DNA strand where it exits the tetramer. Each RuvB hexamer is contacted by two RuvA subunits (via domain III) on 2 adjacent RuvB subunits; this complex drives branch migration. In the full resolvosome a probable DNA-RuvA(4)-RuvB(12)-RuvC(2) complex forms which resolves the HJ.

Its subcellular location is the cytoplasm. The RuvA-RuvB-RuvC complex processes Holliday junction (HJ) DNA during genetic recombination and DNA repair, while the RuvA-RuvB complex plays an important role in the rescue of blocked DNA replication forks via replication fork reversal (RFR). RuvA specifically binds to HJ cruciform DNA, conferring on it an open structure. The RuvB hexamer acts as an ATP-dependent pump, pulling dsDNA into and through the RuvAB complex. HJ branch migration allows RuvC to scan DNA until it finds its consensus sequence, where it cleaves and resolves the cruciform DNA. This Coxiella burnetii (strain CbuK_Q154) (Coxiella burnetii (strain Q154)) protein is Holliday junction branch migration complex subunit RuvA.